Here is a 414-residue protein sequence, read N- to C-terminus: UDP-N-acetylglucosamine 1-carboxyvinyltransferase (414 aa).

19 to 20 (KN) is a binding site for phosphoenolpyruvate. R89 serves as a coordination point for UDP-N-acetyl-alpha-D-glucosamine. Catalysis depends on C113, which acts as the Proton donor. 2-(S-cysteinyl)pyruvic acid O-phosphothioketal is present on C113. UDP-N-acetyl-alpha-D-glucosamine-binding positions include 118-122 (RPIDL), D301, and V323.

This sequence belongs to the EPSP synthase family. MurA subfamily.

The protein localises to the cytoplasm. It catalyses the reaction phosphoenolpyruvate + UDP-N-acetyl-alpha-D-glucosamine = UDP-N-acetyl-3-O-(1-carboxyvinyl)-alpha-D-glucosamine + phosphate. It participates in cell wall biogenesis; peptidoglycan biosynthesis. Cell wall formation. Adds enolpyruvyl to UDP-N-acetylglucosamine. The sequence is that of UDP-N-acetylglucosamine 1-carboxyvinyltransferase from Bdellovibrio bacteriovorus (strain ATCC 15356 / DSM 50701 / NCIMB 9529 / HD100).